The sequence spans 1303 residues: D-lysergyl-peptide-synthetase subunit 2 (1303 aa).

An adenylation (A) domain region spans residues 256–653 (EWCRWTPSAV…CRKSTQVKLR (398 aa)). The region spanning 793–869 (APSNDIEEAF…ELARHTKLVA (77 aa)) is the Carrier domain. Residue Ser830 is modified to O-(pantetheine 4'-phosphoryl)serine. The interval 905–1294 (EDVYPCTPLQ…HAAPRTLIGD (390 aa)) is condensation (C) domain.

The protein belongs to the NRP synthetase family.

Its pathway is alkaloid biosynthesis; ergot alkaloid biosynthesis. Its function is as follows. D-lysergyl-peptide-synthetase subunit 2; part of the gene cluster that mediates the biosynthesis of fungal ergot alkaloid. DmaW catalyzes the first step of ergot alkaloid biosynthesis by condensing dimethylallyl diphosphate (DMAP) and tryptophan to form 4-dimethylallyl-L-tryptophan. The second step is catalyzed by the methyltransferase easF that methylates 4-dimethylallyl-L-tryptophan in the presence of S-adenosyl-L-methionine, resulting in the formation of 4-dimethylallyl-L-abrine. The catalase easC and the FAD-dependent oxidoreductase easE then transform 4-dimethylallyl-L-abrine to chanoclavine-I which is further oxidized by easD in the presence of NAD(+), resulting in the formation of chanoclavine-I aldehyde. Agroclavine dehydrogenase easG then mediates the conversion of chanoclavine-I aldehyde to agroclavine via a non-enzymatic adduct reaction: the substrate is an iminium intermediate that is formed spontaneously from chanoclavine-I aldehyde in the presence of glutathione. The presence of easA is not required to complete this reaction. Further conversion of agroclavine to paspalic acid is a two-step process involving oxidation of agroclavine to elymoclavine and of elymoclavine to paspalic acid, the second step being performed by the elymoclavine oxidase cloA. Paspalic acid is then further converted to D-lysergic acid. Ergopeptines are assembled from D-lysergic acid and three different amino acids by the D-lysergyl-peptide-synthetases composed each of a monomudular and a trimodular nonribosomal peptide synthetase subunit. LpsB and lpsC encode the monomodular subunits responsible for D-lysergic acid activation and incorporation into the ergopeptine backbone. LpsA1 and A2 subunits encode the trimodular nonribosomal peptide synthetase assembling the tripeptide portion of ergopeptines. LpsA1 is responsible for formation of the major ergopeptine, ergotamine, and lpsA2 for alpha-ergocryptine, the minor ergopeptine of the total alkaloid mixture elaborated by C.purpurea. D-lysergyl-tripeptides are assembled by the nonribosomal peptide synthetases and released as N-(D-lysergyl-aminoacyl)-lactams. Cyclolization of the D-lysergyl-tripeptides is performed by the Fe(2+)/2-ketoglutarate-dependent dioxygenase easH which introduces a hydroxyl group into N-(D-lysergyl-aminoacyl)-lactam at alpha-C of the aminoacyl residue followed by spontaneous condensation with the terminal lactam carbonyl group. The chain is D-lysergyl-peptide-synthetase subunit 2 from Claviceps purpurea (strain 20.1) (Ergot fungus).